Here is a 136-residue protein sequence, read N- to C-terminus: Large ribosomal subunit protein uL16 (136 aa).

Belongs to the universal ribosomal protein uL16 family. In terms of assembly, part of the 50S ribosomal subunit.

Its function is as follows. Binds 23S rRNA and is also seen to make contacts with the A and possibly P site tRNAs. The polypeptide is Large ribosomal subunit protein uL16 (Rickettsia africae (strain ESF-5)).